A 608-amino-acid chain; its full sequence is Chaperone protein HtpG (608 aa).

The interval 1–332 (MQFQTEVNQL…VEDLPLNVSR (332 aa)) is a; substrate-binding. The interval 333–536 (EILQENQILK…KNKPDFAMQQ (204 aa)) is b. Residues 537–608 (LLKQMGQEQN…LTKIINKAFS (72 aa)) are c.

This sequence belongs to the heat shock protein 90 family. In terms of assembly, homodimer.

It is found in the cytoplasm. In terms of biological role, molecular chaperone. Has ATPase activity. The chain is Chaperone protein HtpG from Campylobacter jejuni subsp. jejuni serotype O:2 (strain ATCC 700819 / NCTC 11168).